A 189-amino-acid polypeptide reads, in one-letter code: Elongation factor P (189 aa).

Lys34 is subject to N6-(3,6-diaminohexanoyl)-5-hydroxylysine.

The protein belongs to the elongation factor P family. May be beta-lysylated on the epsilon-amino group of Lys-34 by the combined action of EpmA and EpmB, and then hydroxylated on the C5 position of the same residue by EpmC (if this protein is present). Lysylation is critical for the stimulatory effect of EF-P on peptide-bond formation. The lysylation moiety may extend toward the peptidyltransferase center and stabilize the terminal 3-CCA end of the tRNA. Hydroxylation of the C5 position on Lys-34 may allow additional potential stabilizing hydrogen-bond interactions with the P-tRNA.

Its subcellular location is the cytoplasm. Its pathway is protein biosynthesis; polypeptide chain elongation. In terms of biological role, involved in peptide bond synthesis. Alleviates ribosome stalling that occurs when 3 or more consecutive Pro residues or the sequence PPG is present in a protein, possibly by augmenting the peptidyl transferase activity of the ribosome. Modification of Lys-34 is required for alleviation. The chain is Elongation factor P from Halorhodospira halophila (strain DSM 244 / SL1) (Ectothiorhodospira halophila (strain DSM 244 / SL1)).